We begin with the raw amino-acid sequence, 209 residues long: uncharacterized protein (209 aa).

The disordered stretch occupies residues 177 to 209; sequence DNSDNSSDSDDSDSLDGSDDLNDSDNVDNLFVG. A compositionally biased stretch (acidic residues) spans 183-202; the sequence is SDSDDSDSLDGSDDLNDSDN.

This is an uncharacterized protein from Acanthamoeba polyphaga (Amoeba).